Here is a 334-residue protein sequence, read N- to C-terminus: Ketol-acid reductoisomerase (NADP(+)) (334 aa).

Residues threonine 2–threonine 181 enclose the KARI N-terminal Rossmann domain. Residues tyrosine 25–glutamine 28, arginine 48, serine 52, and aspartate 82–glutamine 85 each bind NADP(+). Residue histidine 107 is part of the active site. Glycine 133 contributes to the NADP(+) binding site. A KARI C-terminal knotted domain is found at threonine 182–isoleucine 327. The Mg(2+) site is built by aspartate 190, glutamate 194, glutamate 226, and glutamate 230. Serine 251 provides a ligand contact to substrate.

Belongs to the ketol-acid reductoisomerase family. It depends on Mg(2+) as a cofactor.

The catalysed reaction is (2R)-2,3-dihydroxy-3-methylbutanoate + NADP(+) = (2S)-2-acetolactate + NADPH + H(+). It carries out the reaction (2R,3R)-2,3-dihydroxy-3-methylpentanoate + NADP(+) = (S)-2-ethyl-2-hydroxy-3-oxobutanoate + NADPH + H(+). It functions in the pathway amino-acid biosynthesis; L-isoleucine biosynthesis; L-isoleucine from 2-oxobutanoate: step 2/4. Its pathway is amino-acid biosynthesis; L-valine biosynthesis; L-valine from pyruvate: step 2/4. Functionally, involved in the biosynthesis of branched-chain amino acids (BCAA). Catalyzes an alkyl-migration followed by a ketol-acid reduction of (S)-2-acetolactate (S2AL) to yield (R)-2,3-dihydroxy-isovalerate. In the isomerase reaction, S2AL is rearranged via a Mg-dependent methyl migration to produce 3-hydroxy-3-methyl-2-ketobutyrate (HMKB). In the reductase reaction, this 2-ketoacid undergoes a metal-dependent reduction by NADPH to yield (R)-2,3-dihydroxy-isovalerate. The protein is Ketol-acid reductoisomerase (NADP(+)) of Staphylococcus epidermidis (strain ATCC 35984 / DSM 28319 / BCRC 17069 / CCUG 31568 / BM 3577 / RP62A).